The sequence spans 444 residues: Methylenetetrahydrofolate--tRNA-(uracil-5-)-methyltransferase TrmFO (444 aa).

Residue 10-15 coordinates FAD; it reads GAGLAG.

The protein belongs to the MnmG family. TrmFO subfamily. The cofactor is FAD.

Its subcellular location is the cytoplasm. The enzyme catalyses uridine(54) in tRNA + (6R)-5,10-methylene-5,6,7,8-tetrahydrofolate + NADH + H(+) = 5-methyluridine(54) in tRNA + (6S)-5,6,7,8-tetrahydrofolate + NAD(+). The catalysed reaction is uridine(54) in tRNA + (6R)-5,10-methylene-5,6,7,8-tetrahydrofolate + NADPH + H(+) = 5-methyluridine(54) in tRNA + (6S)-5,6,7,8-tetrahydrofolate + NADP(+). In terms of biological role, catalyzes the folate-dependent formation of 5-methyl-uridine at position 54 (M-5-U54) in all tRNAs. This chain is Methylenetetrahydrofolate--tRNA-(uracil-5-)-methyltransferase TrmFO, found in Streptococcus pneumoniae serotype 2 (strain D39 / NCTC 7466).